The chain runs to 146 residues: MKLHELRAAEGANKASKRVGRGTGSGLGKTSGRGQNGQNSRSGGGVRPGFEGGQMPLYRRLPKRGFKNIFAKEYAAINLDRLNCFEDGTVVTPELLVEKRVVKKVKDGVKILGNGNIEKKLTVKAAKFSKSAIEKIEAAGGKVEVI.

Positions 1–56 are disordered; that stretch reads MKLHELRAAEGANKASKRVGRGTGSGLGKTSGRGQNGQNSRSGGGVRPGFEGGQMP. Composition is skewed to gly residues over residues 21–35 and 42–52; these read RGTG…GRGQ and SGGGVRPGFEG.

Belongs to the universal ribosomal protein uL15 family. As to quaternary structure, part of the 50S ribosomal subunit.

Binds to the 23S rRNA. The protein is Large ribosomal subunit protein uL15 of Clostridium botulinum (strain Okra / Type B1).